The primary structure comprises 100 residues: Apolipoprotein C-II (100 aa).

The signal sequence occupies residues 1 to 22 (MGSRFLLALFLVLLVLGCEVQA). The lipid binding stretch occupies residues 66–74 (SVDEKLRDM). Positions 78 to 100 (SSAAMTTYASIFTDQIFTLLKGE) are lipoprotein lipase cofactor.

This sequence belongs to the apolipoprotein C2 family. In terms of processing, proapolipoprotein C-II is synthesized as a sialic acid containing glycoprotein which is subsequently desialylated prior to its proteolytic processing. Proapolipoprotein C-II, the major form found in plasma undergoes proteolytic cleavage of its N-terminal hexapeptide to generate the mature form apolipoprotein C-II, which occurs as the minor form in plasma.

Its subcellular location is the secreted. In terms of biological role, component of chylomicrons, very low-density lipoproteins (VLDL), low-density lipoproteins (LDL), and high-density lipoproteins (HDL) in plasma. Plays an important role in lipoprotein metabolism as an activator of lipoprotein lipase. The polypeptide is Apolipoprotein C-II (APOC2) (Bramus lutescens (Transcaucasian mole vole)).